We begin with the raw amino-acid sequence, 734 residues long: Photosystem I P700 chlorophyll a apoprotein A2 (734 aa).

8 helical membrane passes run 46–69 (IFASHFGQLAIIFLWTSGNLFHVA), 135–158 (LYTGALFLLFLSTLSLVAGWLHLQ), 175–199 (LNHHLSGLFGVSSLAWTGHLVHVAI), 273–291 (IAHHHLAIAFIFLIAGHMY), 330–353 (IHFQLGLALASLGVITSLVAQHMY), 369–395 (AALYTHHQYIAGFIMTGAFAHGAIFFI), 417–439 (AIISHLSWASLFLGFHTLGLYVH), and 517–535 (FLVHHAIALGLHTTTLILV). Positions 559 and 568 each coordinate [4Fe-4S] cluster. Helical transmembrane passes span 575 to 596 (AFYLAVFWMLNTIGWVTFYWHW) and 643 to 665 (LSVWAWMFLFGHLVWATGFMFLI). Positions 654, 662, and 670 each coordinate chlorophyll a. A phylloquinone-binding site is contributed by Trp-671. Residues 707–727 (LVGLAHFSVGYIFTYAAFLIA) traverse the membrane as a helical segment.

The protein belongs to the PsaA/PsaB family. The PsaA/B heterodimer binds the P700 chlorophyll special pair and subsequent electron acceptors. PSI consists of a core antenna complex that captures photons, and an electron transfer chain that converts photonic excitation into a charge separation. The eukaryotic PSI reaction center is composed of at least 11 subunits. The cofactor is P700 is a chlorophyll a/chlorophyll a' dimer, A0 is one or more chlorophyll a, A1 is one or both phylloquinones and FX is a shared 4Fe-4S iron-sulfur center..

It localises to the plastid. The protein localises to the chloroplast thylakoid membrane. The catalysed reaction is reduced [plastocyanin] + hnu + oxidized [2Fe-2S]-[ferredoxin] = oxidized [plastocyanin] + reduced [2Fe-2S]-[ferredoxin]. Functionally, psaA and PsaB bind P700, the primary electron donor of photosystem I (PSI), as well as the electron acceptors A0, A1 and FX. PSI is a plastocyanin-ferredoxin oxidoreductase, converting photonic excitation into a charge separation, which transfers an electron from the donor P700 chlorophyll pair to the spectroscopically characterized acceptors A0, A1, FX, FA and FB in turn. Oxidized P700 is reduced on the lumenal side of the thylakoid membrane by plastocyanin. The chain is Photosystem I P700 chlorophyll a apoprotein A2 from Agrostis stolonifera (Creeping bentgrass).